The following is a 317-amino-acid chain: MTPILDFEKPIVNLKEKIVELKSFTENSEIDLTKEIETLEERLARLEEDIYGNLKPWNRVQMARHPDRPTTMDYIERIFTDFIEFHGDRFYGEDEAIISGIGYYKDSPVTVIGHQRGKDTKENIRRNFGMPHPEGYRKALRHMQQAEKFNRPIITFIDTKGAYPGKAAEERGQSEAIAKNLMEMAGLQVPIICIVIGEGGSGGALGLGVGNHIHMLENSTYSVISPEGAAAILWKDSTQAKKAAETMKITAPDLKELGIIDQVISEPRGGAHRDVDSQAELIDNIIKQSLVELMLLSSEELVDKRWEKYKQMGTFMS.

The CoA carboxyltransferase C-terminal domain maps to 38–292 (TLEERLARLE…DNIIKQSLVE (255 aa)).

It belongs to the AccA family. As to quaternary structure, acetyl-CoA carboxylase is a heterohexamer composed of biotin carboxyl carrier protein (AccB), biotin carboxylase (AccC) and two subunits each of ACCase subunit alpha (AccA) and ACCase subunit beta (AccD).

The protein localises to the cytoplasm. The catalysed reaction is N(6)-carboxybiotinyl-L-lysyl-[protein] + acetyl-CoA = N(6)-biotinyl-L-lysyl-[protein] + malonyl-CoA. The protein operates within lipid metabolism; malonyl-CoA biosynthesis; malonyl-CoA from acetyl-CoA: step 1/1. Functionally, component of the acetyl coenzyme A carboxylase (ACC) complex. First, biotin carboxylase catalyzes the carboxylation of biotin on its carrier protein (BCCP) and then the CO(2) group is transferred by the carboxyltransferase to acetyl-CoA to form malonyl-CoA. This is Acetyl-coenzyme A carboxylase carboxyl transferase subunit alpha from Oceanobacillus iheyensis (strain DSM 14371 / CIP 107618 / JCM 11309 / KCTC 3954 / HTE831).